The sequence spans 490 residues: Cytochrome P450 2C13, male-specific (490 aa).

Position 435 (C435) interacts with heme.

It belongs to the cytochrome P450 family. Heme is required as a cofactor. As to expression, liver, and to a lesser extent in prostate, kidney, heart and brain.

It localises to the endoplasmic reticulum membrane. The protein localises to the microsome membrane. It carries out the reaction an organic molecule + reduced [NADPH--hemoprotein reductase] + O2 = an alcohol + oxidized [NADPH--hemoprotein reductase] + H2O + H(+). Functionally, cytochromes P450 are a group of heme-thiolate monooxygenases. In liver microsomes, this enzyme is involved in an NADPH-dependent electron transport pathway. It oxidizes a variety of structurally unrelated compounds, including steroids, fatty acids, and xenobiotics. This chain is Cytochrome P450 2C13, male-specific (Cyp2c13), found in Rattus norvegicus (Rat).